Consider the following 71-residue polypeptide: Small ribosomal subunit protein bS21 (71 aa).

Belongs to the bacterial ribosomal protein bS21 family.

This Alcanivorax borkumensis (strain ATCC 700651 / DSM 11573 / NCIMB 13689 / SK2) protein is Small ribosomal subunit protein bS21.